Here is a 344-residue protein sequence, read N- to C-terminus: Holliday junction branch migration complex subunit RuvB (344 aa).

The large ATPase domain (RuvB-L) stretch occupies residues 4-184 (QDRIIDANAK…FGIVQRLEFY (181 aa)). ATP-binding positions include Arg24, Gly65, Lys68, Thr69, Thr70, 131–133 (EDF), Arg174, Tyr184, and Arg221. Thr69 is a binding site for Mg(2+). Residues 185-255 (NIEDLTHIVE…IADLALNMLN (71 aa)) are small ATPAse domain (RuvB-S). Positions 258–344 (EHGFDHMDRR…ALKQDSLPGI (87 aa)) are head domain (RuvB-H). DNA contacts are provided by Arg294, Arg313, and Arg318.

The protein belongs to the RuvB family. In terms of assembly, homohexamer. Forms an RuvA(8)-RuvB(12)-Holliday junction (HJ) complex. HJ DNA is sandwiched between 2 RuvA tetramers; dsDNA enters through RuvA and exits via RuvB. An RuvB hexamer assembles on each DNA strand where it exits the tetramer. Each RuvB hexamer is contacted by two RuvA subunits (via domain III) on 2 adjacent RuvB subunits; this complex drives branch migration. In the full resolvosome a probable DNA-RuvA(4)-RuvB(12)-RuvC(2) complex forms which resolves the HJ.

The protein localises to the cytoplasm. The catalysed reaction is ATP + H2O = ADP + phosphate + H(+). In terms of biological role, the RuvA-RuvB-RuvC complex processes Holliday junction (HJ) DNA during genetic recombination and DNA repair, while the RuvA-RuvB complex plays an important role in the rescue of blocked DNA replication forks via replication fork reversal (RFR). RuvA specifically binds to HJ cruciform DNA, conferring on it an open structure. The RuvB hexamer acts as an ATP-dependent pump, pulling dsDNA into and through the RuvAB complex. RuvB forms 2 homohexamers on either side of HJ DNA bound by 1 or 2 RuvA tetramers; 4 subunits per hexamer contact DNA at a time. Coordinated motions by a converter formed by DNA-disengaged RuvB subunits stimulates ATP hydrolysis and nucleotide exchange. Immobilization of the converter enables RuvB to convert the ATP-contained energy into a lever motion, pulling 2 nucleotides of DNA out of the RuvA tetramer per ATP hydrolyzed, thus driving DNA branch migration. The RuvB motors rotate together with the DNA substrate, which together with the progressing nucleotide cycle form the mechanistic basis for DNA recombination by continuous HJ branch migration. Branch migration allows RuvC to scan DNA until it finds its consensus sequence, where it cleaves and resolves cruciform DNA. The polypeptide is Holliday junction branch migration complex subunit RuvB (Saccharophagus degradans (strain 2-40 / ATCC 43961 / DSM 17024)).